We begin with the raw amino-acid sequence, 294 residues long: tRNA-uridine aminocarboxypropyltransferase 1 (294 aa).

Positions 158–185 (DMQNDSSCEPSLKRPKCSQQYDKSKNEG) are disordered. Residues 202–205 (DSTW) carry the DXTW motif.

This sequence belongs to the TDD superfamily. DTWD1 family.

The protein localises to the nucleus. It catalyses the reaction a uridine in tRNA + S-adenosyl-L-methionine = a 3-[(3S)-3-amino-3-carboxypropyl]uridine in tRNA + S-methyl-5'-thioadenosine + H(+). Catalyzes the formation of 3-(3-amino-3-carboxypropyl)uridine (acp3U) at position 20 in the D-loop of several cytoplasmic tRNAs (acp3U(20)). The chain is tRNA-uridine aminocarboxypropyltransferase 1 from Xenopus tropicalis (Western clawed frog).